We begin with the raw amino-acid sequence, 465 residues long: Cysteine--tRNA ligase (465 aa).

Zn(2+) is bound at residue C27. A 'HIGH' region motif is present at residues 29-39 (PTVYNYIHIGN). Residues C207, H232, and E236 each coordinate Zn(2+). The 'KMSKS' region motif lies at 264–268 (KMSKS). K267 provides a ligand contact to ATP.

This sequence belongs to the class-I aminoacyl-tRNA synthetase family. Monomer. Requires Zn(2+) as cofactor.

The protein resides in the cytoplasm. It catalyses the reaction tRNA(Cys) + L-cysteine + ATP = L-cysteinyl-tRNA(Cys) + AMP + diphosphate. The chain is Cysteine--tRNA ligase from Clostridioides difficile (strain 630) (Peptoclostridium difficile).